The chain runs to 225 residues: 2-C-methyl-D-erythritol 4-phosphate cytidylyltransferase (225 aa).

This sequence belongs to the IspD/TarI cytidylyltransferase family. IspD subfamily.

The catalysed reaction is 2-C-methyl-D-erythritol 4-phosphate + CTP + H(+) = 4-CDP-2-C-methyl-D-erythritol + diphosphate. The protein operates within isoprenoid biosynthesis; isopentenyl diphosphate biosynthesis via DXP pathway; isopentenyl diphosphate from 1-deoxy-D-xylulose 5-phosphate: step 2/6. Catalyzes the formation of 4-diphosphocytidyl-2-C-methyl-D-erythritol from CTP and 2-C-methyl-D-erythritol 4-phosphate (MEP). In Prochlorococcus marinus (strain NATL2A), this protein is 2-C-methyl-D-erythritol 4-phosphate cytidylyltransferase.